The following is a 252-amino-acid chain: 5'-nucleotidase SurE (252 aa).

Positions 8, 9, 39, and 96 each coordinate a divalent metal cation.

The protein belongs to the SurE nucleotidase family. It depends on a divalent metal cation as a cofactor.

The protein localises to the cytoplasm. It carries out the reaction a ribonucleoside 5'-phosphate + H2O = a ribonucleoside + phosphate. Functionally, nucleotidase that shows phosphatase activity on nucleoside 5'-monophosphates. This is 5'-nucleotidase SurE from Petrotoga mobilis (strain DSM 10674 / SJ95).